Here is a 280-residue protein sequence, read N- to C-terminus: 3-phenylpropionate-dihydrodiol/cinnamic acid-dihydrodiol dehydrogenase (280 aa).

Ser143 contributes to the substrate binding site. The active-site Proton acceptor is Tyr156.

The protein belongs to the short-chain dehydrogenases/reductases (SDR) family.

It catalyses the reaction 3-(cis-5,6-dihydroxycyclohexa-1,3-dien-1-yl)propanoate + NAD(+) = 3-(2,3-dihydroxyphenyl)propanoate + NADH + H(+). The catalysed reaction is (2E)-3-(cis-5,6-dihydroxycyclohexa-1,3-dien-1-yl)prop-2-enoate + NAD(+) = (2E)-3-(2,3-dihydroxyphenyl)prop-2-enoate + NADH + H(+). The protein operates within aromatic compound metabolism; 3-phenylpropanoate degradation. In terms of biological role, converts 3-phenylpropionate-dihydrodiol (PP-dihydrodiol) and cinnamic acid-dihydrodiol (CI-dihydrodiol) into 3-(2,3-dihydroxylphenyl)propanoic acid (DHPP) and 2,3-dihydroxicinnamic acid (DHCI), respectively. The protein is 3-phenylpropionate-dihydrodiol/cinnamic acid-dihydrodiol dehydrogenase of Photorhabdus laumondii subsp. laumondii (strain DSM 15139 / CIP 105565 / TT01) (Photorhabdus luminescens subsp. laumondii).